Consider the following 2228-residue polypeptide: Genome polyprotein (2228 aa).

The disordered stretch occupies residues T55 to K76. Short sequence motifs ((L)YPX(n)L motif) lie at residues Y167–L171 and Y200–L205. Positions M766–Q836 are involved in P1-2A pentamerization. The helical transmembrane segment at T1011–I1031 threads the bilayer. Positions I1043–E1070 are membrane-penetrating ability. The stretch at N1127–C1153 forms a coiled coil. One can recognise an SF3 helicase domain in the interval H1204–M1366. G1230–S1237 serves as a coordination point for ATP. A helical membrane pass occupies residues W1462–Y1482. Y1499 carries the O-(5'-phospho-RNA)-tyrosine modification. One can recognise a Peptidase C3 domain in the interval D1514–F1728. Catalysis depends on for protease 3C activity residues H1563, D1603, and C1691. The region spanning D1977–N2098 is the RdRp catalytic domain.

This sequence belongs to the picornaviridae polyprotein family. In terms of assembly, homodimer. Homomultimer; probably interacts with membranes in a multimeric form. Seems to assemble into amyloid-like fibers. Homodimer. Monomer. Interacts with protein 3CD. As to quaternary structure, interacts with host ACBD3. In terms of assembly, interacts with protein 3AB. Interacts with human MAVS. As to quaternary structure, homodimer; disulfide-linked. In terms of assembly, homopentamer. Homooligomer. Interacts with capsid protein VP2. Interacts with capsid protein VP3. As to quaternary structure, interacts with capsid protein VP1. Interacts with capsid protein VP3. In terms of assembly, interacts with capsid protein VP1. Interacts with capsid protein VP2. In terms of processing, specific enzymatic cleavages by viral protease in vivo yield a variety of precursors and mature proteins. Polyprotein processing intermediates are produced, such as P1-2A which is a functional precursor of the structural proteins, VP0 which is a VP4-VP2 precursor, VP1-2A precursor, 3ABC precursor which is a stable and catalytically active precursor of 3A, 3B and 3C proteins, 3AB and 3CD precursors. The assembly signal 2A is removed from VP1-2A by a host protease, possibly host Cathepsin L. This cleavage occurs over a region of 3 amino-acids probably generating VP1 proteins with heterogeneous C-termini. Post-translationally, during virion maturation, immature virions are rendered infectious following cleavage of VP0 into VP4 and VP2. This maturation seems to be an autocatalytic event triggered by the presence of RNA in the capsid and is followed by a conformational change of the particle. The assembly signal 2A is removed from VP1-2A by a host protease, possibly host Cathepsin L in naked virions. This cleavage does not occur in enveloped virions. This cleavage occurs over a region of 3 amino-acids probably generating VP1 proteins with heterogeneous C-termini. In terms of processing, VPg is uridylylated prior to priming replication into VPg-pUpU. Post-translationally, unlike other picornaviruses, does not seem to be myristoylated.

It localises to the virion. Its subcellular location is the host endosome. The protein localises to the host multivesicular body. It is found in the host membrane. The protein resides in the host mitochondrion outer membrane. It localises to the host cytoplasm. Its subcellular location is the host cytoplasmic vesicle membrane. The enzyme catalyses RNA(n) + a ribonucleoside 5'-triphosphate = RNA(n+1) + diphosphate. It carries out the reaction a ribonucleoside 5'-triphosphate + H2O = a ribonucleoside 5'-diphosphate + phosphate + H(+). The catalysed reaction is Selective cleavage of Gln-|-Gly bond in the poliovirus polyprotein. In other picornavirus reactions Glu may be substituted for Gln, and Ser or Thr for Gly.. Capsid proteins VP1, VP2, and VP3 form a closed capsid enclosing the viral positive strand RNA genome. All these proteins contain a beta-sheet structure called beta-barrel jelly roll. Together they form an icosahedral capsid (T=3) composed of 60 copies of each VP1, VP2, and VP3, with a diameter of approximately 300 Angstroms. VP1 is situated at the 12 fivefold axes, whereas VP2 and VP3 are located at the quasi-sixfold axes. The naked capsid interacts with the host receptor HAVCR1 to provide virion attachment to and probably entry into the target cell. Its function is as follows. VP0 precursor is a component of the immature procapsids. Functionally, plays a role in the assembly of the 12 pentamers into an icosahedral structure. Has not been detected in mature virions, supposedly owing to its small size. In terms of biological role, precursor component of immature procapsids that corresponds to an extended form of the structural protein VP1. After maturation, possibly by the host Cathepsin L, the assembly signal 2A is cleaved to give rise to the mature VP1 protein. Functions as a viroporin. Affects membrane integrity and causes an increase in membrane permeability. Involved in host intracellular membrane rearrangements probably to give rise to the viral factories. Does not disrupt calcium homeostasis or glycoprotein trafficking. Antagonizes the innate immune response of the host by suppressing IFN-beta synthesis, which it achieves by interfering with the RIG-I/IFIH1 pathway. Its function is as follows. Affects membrane integrity and causes an increase in membrane permeability. Functionally, associates with and induces structural rearrangements of intracellular membranes. Displays RNA-binding activity. In terms of biological role, the precursor 3ABC is targeted to the mitochondrial membrane where protease 3C activity cleaves and inhibits the host antiviral protein MAVS, thereby disrupting activation of IRF3 through the IFIH1/MDA5 pathway. In vivo, the protease activity of 3ABC precursor is more efficient in cleaving the 2BC precursor than that of protein 3C. The 3ABC precursor may therefore play a role in the proteolytic processing of the polyprotein. Possible viroporin. Interacts with the 3CD precursor and with RNA structures found at both the 5'- and 3'-termini of the viral genome. Since the 3AB precursor contains the hydrophobic domain 3A, it probably anchors the whole viral replicase complex to intracellular membranes on which viral RNA synthesis occurs. Its function is as follows. May serve as membrane anchor to the 3AB and 3ABC precursors via its hydrophobic domain. May interact with RNA. Functionally, acts as a primer for viral RNA replication and remains covalently bound to viral genomic RNA. VPg is uridylylated prior to priming replication into VPg-pUpU. The VPg-pUpU is then used as primer on the genomic RNA poly(A) by the RNA-dependent RNA polymerase to replicate the viral genome. In terms of biological role, cysteine protease that generates mature viral proteins from the precursor polyprotein. In addition to its proteolytic activity, it binds to viral RNA, and thus influences viral genome replication. RNA and substrate bind cooperatively to the protease. Cleaves IKBKG/NEMO to impair innate immune signaling. Cleaves host PABPC1 which may participate in the switch of viral translation to RNA synthesis. Interacts with the 3AB precursor and with RNA structures found at both the 5'- and 3'-termini of the viral genome. Disrupts TLR3 signaling by degrading the host adapter protein TICAM1/TRIF. Its function is as follows. RNA-directed RNA polymerase 3D-POL replicates genomic and antigenomic RNA by recognizing replications specific signals. The protein is Genome polyprotein of Human hepatitis A virus genotype IIIA (isolate NOR-21) (HHAV).